The primary structure comprises 171 residues: S-ribosylhomocysteine lyase (171 aa).

The Fe cation site is built by H54, H58, and C128.

This sequence belongs to the LuxS family. As to quaternary structure, homodimer. It depends on Fe cation as a cofactor.

It carries out the reaction S-(5-deoxy-D-ribos-5-yl)-L-homocysteine = (S)-4,5-dihydroxypentane-2,3-dione + L-homocysteine. In terms of biological role, involved in the synthesis of autoinducer 2 (AI-2) which is secreted by bacteria and is used to communicate both the cell density and the metabolic potential of the environment. The regulation of gene expression in response to changes in cell density is called quorum sensing. Catalyzes the transformation of S-ribosylhomocysteine (RHC) to homocysteine (HC) and 4,5-dihydroxy-2,3-pentadione (DPD). The sequence is that of S-ribosylhomocysteine lyase from Shigella boydii serotype 4 (strain Sb227).